The following is a 177-amino-acid chain: Large ribosomal subunit protein uL6 (177 aa).

This sequence belongs to the universal ribosomal protein uL6 family. As to quaternary structure, part of the 50S ribosomal subunit.

In terms of biological role, this protein binds to the 23S rRNA, and is important in its secondary structure. It is located near the subunit interface in the base of the L7/L12 stalk, and near the tRNA binding site of the peptidyltransferase center. This is Large ribosomal subunit protein uL6 from Pseudomonas fluorescens (strain ATCC BAA-477 / NRRL B-23932 / Pf-5).